We begin with the raw amino-acid sequence, 350 residues long: Anthranilate phosphoribosyltransferase (350 aa).

5-phospho-alpha-D-ribose 1-diphosphate contacts are provided by residues Gly81, 84-85 (GD), Thr89, 91-94 (NIST), 109-117 (KHGGRSVSS), and Ser121. Gly81 is a binding site for anthranilate. Ser93 serves as a coordination point for Mg(2+). Arg167 provides a ligand contact to anthranilate. Residues Asp230 and Glu231 each contribute to the Mg(2+) site.

Belongs to the anthranilate phosphoribosyltransferase family. Homodimer. The cofactor is Mg(2+).

The catalysed reaction is N-(5-phospho-beta-D-ribosyl)anthranilate + diphosphate = 5-phospho-alpha-D-ribose 1-diphosphate + anthranilate. It participates in amino-acid biosynthesis; L-tryptophan biosynthesis; L-tryptophan from chorismate: step 2/5. In terms of biological role, catalyzes the transfer of the phosphoribosyl group of 5-phosphorylribose-1-pyrophosphate (PRPP) to anthranilate to yield N-(5'-phosphoribosyl)-anthranilate (PRA). This chain is Anthranilate phosphoribosyltransferase, found in Nitrosospira multiformis (strain ATCC 25196 / NCIMB 11849 / C 71).